We begin with the raw amino-acid sequence, 294 residues long: Nucleotide-binding protein Dde_1774 (294 aa).

Residue 14–21 participates in ATP binding; the sequence is GLSGAGKS. Residue 66 to 69 coordinates GTP; sequence DLRQ.

This sequence belongs to the RapZ-like family.

In terms of biological role, displays ATPase and GTPase activities. This chain is Nucleotide-binding protein Dde_1774, found in Oleidesulfovibrio alaskensis (strain ATCC BAA-1058 / DSM 17464 / G20) (Desulfovibrio alaskensis).